We begin with the raw amino-acid sequence, 484 residues long: Putative cysteine ligase BshC (484 aa).

Positions 372–435 (RAFRDRVEGL…AARDEVLARH (64 aa)) form a coiled coil.

It belongs to the BshC family.

The chain is Putative cysteine ligase BshC from Thermus thermophilus (strain ATCC BAA-163 / DSM 7039 / HB27).